A 151-amino-acid polypeptide reads, in one-letter code: UPF0178 protein Tcr_1995 (151 aa).

A disordered region spans residues 116–135 (RSSGVDTGGPPPLNQKDRQA).

This sequence belongs to the UPF0178 family.

This Hydrogenovibrio crunogenus (strain DSM 25203 / XCL-2) (Thiomicrospira crunogena) protein is UPF0178 protein Tcr_1995.